We begin with the raw amino-acid sequence, 365 residues long: Ribosomal RNA large subunit methyltransferase F (365 aa).

A disordered region spans residues 1–48 (MSKPAVKSVQSATAKTATRAVNIRQKVKAPKQAKPEGKGSTKPVKDRP). Positions 33–48 (AKPEGKGSTKPVKDRP) are enriched in basic and acidic residues.

It belongs to the methyltransferase superfamily. METTL16/RlmF family.

It is found in the cytoplasm. The enzyme catalyses adenosine(1618) in 23S rRNA + S-adenosyl-L-methionine = N(6)-methyladenosine(1618) in 23S rRNA + S-adenosyl-L-homocysteine + H(+). Functionally, specifically methylates the adenine in position 1618 of 23S rRNA. The chain is Ribosomal RNA large subunit methyltransferase F from Shewanella baltica (strain OS223).